Reading from the N-terminus, the 421-residue chain is AP-3 complex subunit mu (421 aa).

An MHD domain is found at 178–420 (QNKIFFDIIE…TTKAGKFQVR (243 aa)).

It belongs to the adaptor complexes medium subunit family. As to quaternary structure, adaptor protein complex 3 (AP-3) is a heterotetramer composed of two large adaptins (delta-type subunit and beta-type subunit), a medium adaptin (mu-type subunit) and a small adaptin (sigma-type subunit).

Its subcellular location is the endosome membrane. Functionally, part of the AP-3 complex, an adaptor-related complex which is essential for the compartmentalization of the endocytic pathway. This Dictyostelium discoideum (Social amoeba) protein is AP-3 complex subunit mu (apm3).